Here is a 206-residue protein sequence, read N- to C-terminus: Pyridoxine/pyridoxamine 5'-phosphate oxidase (206 aa).

FMN is bound by residues 53–58 (RMVLLK), 68–69 (YT), Lys-75, and Gln-97. Lys-58 lines the substrate pocket. Tyr-115, Arg-119, and Ser-123 together coordinate substrate. FMN contacts are provided by residues 132 to 133 (QS) and Trp-177. 183-185 (RLH) is a substrate binding site. Arg-187 contacts FMN.

The protein belongs to the pyridoxamine 5'-phosphate oxidase family. Homodimer. FMN is required as a cofactor.

It carries out the reaction pyridoxamine 5'-phosphate + O2 + H2O = pyridoxal 5'-phosphate + H2O2 + NH4(+). The catalysed reaction is pyridoxine 5'-phosphate + O2 = pyridoxal 5'-phosphate + H2O2. Its pathway is cofactor metabolism; pyridoxal 5'-phosphate salvage; pyridoxal 5'-phosphate from pyridoxamine 5'-phosphate: step 1/1. The protein operates within cofactor metabolism; pyridoxal 5'-phosphate salvage; pyridoxal 5'-phosphate from pyridoxine 5'-phosphate: step 1/1. Its function is as follows. Catalyzes the oxidation of either pyridoxine 5'-phosphate (PNP) or pyridoxamine 5'-phosphate (PMP) into pyridoxal 5'-phosphate (PLP). In Rhizobium etli (strain CIAT 652), this protein is Pyridoxine/pyridoxamine 5'-phosphate oxidase.